The following is a 55-amino-acid chain: Large ribosomal subunit protein bL33 (55 aa).

This sequence belongs to the bacterial ribosomal protein bL33 family.

The chain is Large ribosomal subunit protein bL33 from Xanthomonas axonopodis pv. citri (strain 306).